A 161-amino-acid chain; its full sequence is uncharacterized protein (161 aa).

A signal peptide spans 1 to 27 (MKKIGLLFMLCLAALFTIGFPAQQADA).

The protein resides in the secreted. This is an uncharacterized protein from Bacillus subtilis (strain 168).